We begin with the raw amino-acid sequence, 837 residues long: MSLSHLYRDGEGRIDDDDDERENFEITDWDLQNEFNPNRQRHWQTKEEATYGVWAERDSDDERPSFGGKRARDYSAPVNFISAGLKKGAAEEAELEDSDDEERPVKQDDFPKDFGPRKLKTGGNFKPSQKGFAGGTKSFMDFGSWERHTKGIGQKLLQKMGYVPGRGLGKNAQGIINPIEAKQRKGKGAVGAYGSERTTQSMQDFPVVDSEEEAEEEFQKELSQWRKDPSGSKKKPKYSYKTVEELKAKGRISKKLTAPQKELSQVKVIDMTGREQKVYYSYSQISHKHNVPDDGLPLQSQQLPQSGKEAKAPGFALPELEHNLQLLIDLTEQEIIQNDRQLQYERDMVVNLFHELEKMTEVLDHEERVISNLSKVLEMVEECERRMQPDCSNPLTLDECARIFETLQDKYYEEYRMSDRVDLAVAIVYPLMKEYFKEWDPLKDCTYGTEIISKWKSLLENDQLLSHGGQDLSADAFHRLIWEVWMPFVRNIVTQWQPRNCDPMVDFLDSWVHIIPVWILDNILDQLIFPKLQKEVENWNPLTDTVPIHSWIHPWLPLMQARLEPLYSPIRSKLSSALQKWHPSDSSAKLILQPWKDVFTPGSWEAFMVKNIVPKLGMCLGELVINPHQQHMDAFYWVIDWEGMISVSSLVGLLEKHFFPKWLQVLCSWLSNSPNYEEITKWYLGWKSMFSDQVLAHPSVKDKFNEALDIMNRAVSSNVGAYMQPGARENIAYLTHTERRKDFQYEAMQERREAENMAQRGIGVAASSVPMNFKDLIETKAEEHNIVFMPVIGKRHEGKQLYTFGRIVIYIDRGVVFVQGEKTWVPTSLQSLIDMAK.

Basic and acidic residues-rich tracts occupy residues 1 to 13 and 53 to 64; these read MSLS…GEGR and VWAERDSDDERP. 3 disordered regions span residues 1 to 21, 53 to 72, and 85 to 133; these read MSLS…DDER, VWAE…KRAR, and LKKG…KGFA. Residues 1-50 are required for interaction with DHX15; the sequence is MSLSHLYRDGEGRIDDDDDERENFEITDWDLQNEFNPNRQRHWQTKEEAT. Ser2, Ser59, and Ser98 each carry phosphoserine. The span at 91–102 shows a compositional bias: acidic residues; that stretch reads EEAELEDSDDEE. Residues 103–116 show a composition bias toward basic and acidic residues; that stretch reads RPVKQDDFPKDFGP. Residue Ser144 is modified to Phosphoserine. The region spanning 149 to 195 is the G-patch domain; the sequence is TKGIGQKLLQKMGYVPGRGLGKNAQGIINPIEAKQRKGKGAVGAYGS. Residues 179–236 form a disordered region; the sequence is IEAKQRKGKGAVGAYGSERTTQSMQDFPVVDSEEEAEEEFQKELSQWRKDPSGSKKKP. Ser210 is modified (phosphoserine). Residues 217 to 231 show a composition bias toward basic and acidic residues; sequence EFQKELSQWRKDPSG. The short motif at 700–705 is the Nuclear localization signal element; sequence VKDKFN. Residues 710–734 are required for nuclear speckle localization; that stretch reads IMNRAVSSNVGAYMQPGARENIAYL.

It belongs to the TFP11/STIP family. As to quaternary structure, identified in the spliceosome C complex. Found in the Intron Large (IL) complex, a post-mRNA release spliceosomal complex containing the excised intron, U2, U5 and U6 snRNPs, and splicing factors. Interacts with TUFT1. Interacts with DHX15; indicative for a recruitment of DHX15 to the IL complex. Interacts with GCFC2.

It is found in the cytoplasm. The protein localises to the nucleus. Functionally, involved in pre-mRNA splicing, specifically in spliceosome disassembly during late-stage splicing events. Intron turnover seems to proceed through reactions in two lariat-intron associated complexes termed Intron Large (IL) and Intron Small (IS). In cooperation with DHX15 seems to mediate the transition of the U2, U5 and U6 snRNP-containing IL complex to the snRNP-free IS complex leading to efficient debranching and turnover of excised introns. May play a role in the differentiation of ameloblasts and odontoblasts or in the forming of the enamel extracellular matrix. This Macaca mulatta (Rhesus macaque) protein is Tuftelin-interacting protein 11 (TFIP11).